The sequence spans 335 residues: Glucokinase (335 aa).

11–16 lines the ATP pocket; the sequence is ADIGGT.

Belongs to the bacterial glucokinase family.

The protein localises to the cytoplasm. It catalyses the reaction D-glucose + ATP = D-glucose 6-phosphate + ADP + H(+). This Xanthomonas axonopodis pv. citri (strain 306) protein is Glucokinase.